Reading from the N-terminus, the 317-residue chain is Ribonuclease H2 subunit A (317 aa).

Residues 43–270 enclose the RNase H type-2 domain; it reads PCCLGVDEAG…AKDMLETKGG (228 aa). A divalent metal cation is bound by residues D49, E50, and D166.

The protein belongs to the RNase HII family. Eukaryotic subfamily. Mn(2+) is required as a cofactor. Requires Mg(2+) as cofactor.

The catalysed reaction is Endonucleolytic cleavage to 5'-phosphomonoester.. In terms of biological role, endonuclease that specifically degrades the RNA of RNA-DNA hybrids. Participates in DNA replication. The protein is Ribonuclease H2 subunit A (rnh-201) of Neurospora crassa (strain ATCC 24698 / 74-OR23-1A / CBS 708.71 / DSM 1257 / FGSC 987).